A 55-amino-acid chain; its full sequence is GRPSARYDAPYCSQEEVRECDDDCSGNPVRDACQCAYDPAGSPACDCFCVEPWRR.

Positions 1–5 are excised as a propeptide; the sequence is GRPSA.

Post-translationally, contains 4 disulfide bonds. As to expression, expressed by the venom duct.

The protein localises to the secreted. Probable neurotoxin with unknown target. Possibly targets ion channels. The protein is Conotoxin Cal22c of Californiconus californicus (California cone).